Here is a 64-residue protein sequence, read N- to C-terminus: Large ribosomal subunit protein bL35 (64 aa).

It belongs to the bacterial ribosomal protein bL35 family.

This chain is Large ribosomal subunit protein bL35, found in Acinetobacter baylyi (strain ATCC 33305 / BD413 / ADP1).